We begin with the raw amino-acid sequence, 349 residues long: Magnesium-protoporphyrin IX monomethyl ester [oxidative] cyclase (349 aa).

The disordered stretch occupies residues 1 to 22; it reads MTATASASSVSGSLGRNELPPH.

This sequence belongs to the AcsF family. It depends on Fe cation as a cofactor.

The enzyme catalyses Mg-protoporphyrin IX 13-monomethyl ester + 3 NADPH + 3 O2 + 2 H(+) = 3,8-divinyl protochlorophyllide a + 3 NADP(+) + 5 H2O. Its pathway is porphyrin-containing compound metabolism; chlorophyll biosynthesis (light-independent). Functionally, catalyzes the formation of the isocyclic ring in chlorophyll biosynthesis. Mediates the cyclase reaction, which results in the formation of divinylprotochlorophyllide (Pchlide) characteristic of all chlorophylls from magnesium-protoporphyrin IX 13-monomethyl ester (MgPMME). The chain is Magnesium-protoporphyrin IX monomethyl ester [oxidative] cyclase from Prochlorococcus marinus (strain MIT 9211).